We begin with the raw amino-acid sequence, 64 residues long: Conotoxin Mr3.5 (64 aa).

Positions Met1–Ala19 are cleaved as a signal peptide. Positions Leu20–Arg46 are excised as a propeptide. 3 disulfides stabilise this stretch: Cys49–Cys58, Cys50–Cys62, and Cys54–Cys63. Cys63 is subject to Cysteine amide.

It belongs to the conotoxin M superfamily. As to expression, expressed by the venom duct.

The protein resides in the secreted. In Conus marmoreus (Marble cone), this protein is Conotoxin Mr3.5.